Here is a 46-residue protein sequence, read N- to C-terminus: Protein YpdJ (46 aa).

Functionally, may be involved in H(2) production during fermentative growth. The chain is Protein YpdJ (ypdJ) from Escherichia coli (strain K12).